The following is a 175-amino-acid chain: T-cell surface glycoprotein CD3 epsilon chain (175 aa).

The signal sequence occupies residues 1–21 (MRCEVPLPLLGLLLCVVGAAA). At 22-100 (QGGQEEFAVE…VCANCEELDT (79 aa)) the chain is on the extracellular side. Residues 101–121 (FTVVGIIAADLLITLGVLILV) traverse the membrane as a helical segment. Over 122–175 (YYFSKNKKGQSRAAAGSRPRAQKMRRPPPVPNPDYEPIRKGQRDVYAGLEHRGF) the chain is Cytoplasmic. The segment at 133 to 163 (RAAAGSRPRAQKMRRPPPVPNPDYEPIRKGQ) is disordered. Residues 146–173 (RRPPPVPNPDYEPIRKGQRDVYAGLEHR) form the ITAM domain.

As to quaternary structure, the TCR/CD3 complex of T-lymphocytes consists of either a TCR alpha/beta or TCR gamma/delta heterodimer coexpressed at the cell surface with the invariant subunits of CD3 labeled gamma, delta, epsilon, zeta, and eta.

The protein localises to the cell membrane. In terms of biological role, the CD3 complex mediates signal transduction, resulting in T-cell activation and proliferation. Required for normal immune responses. This chain is T-cell surface glycoprotein CD3 epsilon chain (CD3E), found in Gallus gallus (Chicken).